A 268-amino-acid polypeptide reads, in one-letter code: Speedy protein E4A (268 aa).

Disordered stretches follow at residues 1 to 26 (MGEG…LGFV) and 43 to 97 (LCSE…LDSE). A compositionally biased stretch (polar residues) spans 43-52 (LCSEEQSPQP). The speedy/Ringo box; Required for CDK-binding stretch occupies residues 134–265 (PEHHKVFTKL…DLWVWARDRT (132 aa)).

Belongs to the Speedy/Ringo family. Interacts with CDK1. Does not interact with CDK2 in vivo. As to expression, testis-specific.

It is found in the nucleus. Functionally, promotes progression through the cell cycle via binding and activation of CDK1. The chain is Speedy protein E4A from Mus musculus (Mouse).